We begin with the raw amino-acid sequence, 1059 residues long: Isoleucine--tRNA ligase (1059 aa).

The 'HIGH' region motif lies at 47 to 57; it reads PYTTGHIHLGT. The short motif at 591–595 is the 'KMSKS' region element; it reads KMSKS. Lysine 594 provides a ligand contact to ATP.

It belongs to the class-I aminoacyl-tRNA synthetase family. IleS type 2 subfamily. As to quaternary structure, monomer. Zn(2+) is required as a cofactor.

Its subcellular location is the cytoplasm. The catalysed reaction is tRNA(Ile) + L-isoleucine + ATP = L-isoleucyl-tRNA(Ile) + AMP + diphosphate. In terms of biological role, catalyzes the attachment of isoleucine to tRNA(Ile). As IleRS can inadvertently accommodate and process structurally similar amino acids such as valine, to avoid such errors it has two additional distinct tRNA(Ile)-dependent editing activities. One activity is designated as 'pretransfer' editing and involves the hydrolysis of activated Val-AMP. The other activity is designated 'posttransfer' editing and involves deacylation of mischarged Val-tRNA(Ile). The sequence is that of Isoleucine--tRNA ligase from Methanoculleus marisnigri (strain ATCC 35101 / DSM 1498 / JR1).